The following is a 664-amino-acid chain: Methionine--tRNA ligase (664 aa).

The short motif at 15 to 25 (YYPSGKLHIGH) is the 'HIGH' region element. Residues 311-315 (KMSKS) carry the 'KMSKS' region motif. K314 provides a ligand contact to ATP. Positions 536 to 556 (MQGSAPAKEETKEEEPQEVDR) are disordered. Residues 570-662 (LRVAEVIEAE…IDQSLPKGTR (93 aa)) form the tRNA-binding domain.

The protein belongs to the class-I aminoacyl-tRNA synthetase family. MetG type 2B subfamily. As to quaternary structure, homodimer.

The protein resides in the cytoplasm. It carries out the reaction tRNA(Met) + L-methionine + ATP = L-methionyl-tRNA(Met) + AMP + diphosphate. Is required not only for elongation of protein synthesis but also for the initiation of all mRNA translation through initiator tRNA(fMet) aminoacylation. This chain is Methionine--tRNA ligase (metG), found in Bacillus subtilis (strain 168).